Consider the following 336-residue polypeptide: Probable tRNA N6-adenosine threonylcarbamoyltransferase (336 aa).

Positions 110, 114, and 131 each coordinate a divalent metal cation. Substrate is bound by residues 131–135, D163, G178, E182, and N267; that span reads YVSGG. D295 is a binding site for a divalent metal cation.

It belongs to the KAE1 / TsaD family. In terms of assembly, component of the EKC/KEOPS complex; the whole complex dimerizes. It depends on a divalent metal cation as a cofactor.

The protein resides in the cytoplasm. It localises to the nucleus. It carries out the reaction L-threonylcarbamoyladenylate + adenosine(37) in tRNA = N(6)-L-threonylcarbamoyladenosine(37) in tRNA + AMP + H(+). Functionally, component of the EKC/KEOPS complex that is required for the formation of a threonylcarbamoyl group on adenosine at position 37 (t(6)A37) in tRNAs that read codons beginning with adenine. The complex is probably involved in the transfer of the threonylcarbamoyl moiety of threonylcarbamoyl-AMP (TC-AMP) to the N6 group of A37. Osgep likely plays a direct catalytic role in this reaction, but requires other protein(s) of the complex to fulfill this activity. In Dictyostelium discoideum (Social amoeba), this protein is Probable tRNA N6-adenosine threonylcarbamoyltransferase.